We begin with the raw amino-acid sequence, 109 residues long: MSKRPAFPGMGGMNMQQMMKQAKKLQEQMAQEQENITTQEFTGKAADDMVVATFTGDRTLKSLFIKPEAIDPDDPDMLEDLVIDAVNKGLKQIDQATQQSLGKYTKGLM.

The disordered stretch occupies residues 18 to 40 (MMKQAKKLQEQMAQEQENITTQE).

The protein belongs to the YbaB/EbfC family. Homodimer.

It localises to the cytoplasm. It is found in the nucleoid. In terms of biological role, binds to DNA and alters its conformation. May be involved in regulation of gene expression, nucleoid organization and DNA protection. The chain is Nucleoid-associated protein Ldb1634 from Lactobacillus delbrueckii subsp. bulgaricus (strain ATCC 11842 / DSM 20081 / BCRC 10696 / JCM 1002 / NBRC 13953 / NCIMB 11778 / NCTC 12712 / WDCM 00102 / Lb 14).